Reading from the N-terminus, the 229-residue chain is Uracil-DNA glycosylase (229 aa).

Aspartate 65 acts as the Proton acceptor in catalysis.

This sequence belongs to the uracil-DNA glycosylase (UDG) superfamily. UNG family.

It localises to the cytoplasm. The catalysed reaction is Hydrolyzes single-stranded DNA or mismatched double-stranded DNA and polynucleotides, releasing free uracil.. Its function is as follows. Excises uracil residues from the DNA which can arise as a result of misincorporation of dUMP residues by DNA polymerase or due to deamination of cytosine. In Oceanobacillus iheyensis (strain DSM 14371 / CIP 107618 / JCM 11309 / KCTC 3954 / HTE831), this protein is Uracil-DNA glycosylase.